Reading from the N-terminus, the 204-residue chain is uncharacterized protein (204 aa).

The signal sequence occupies residues 1 to 24 (MPINTFCKISLFICALFCSTVTLA).

This is an uncharacterized protein from Pasteurella multocida (strain Pm70).